Reading from the N-terminus, the 969-residue chain is RNA polymerase-associated protein RapA (969 aa).

In terms of domain architecture, Helicase ATP-binding spans E162–D339. D175 to T182 serves as a coordination point for ATP. The short motif at D285–H288 is the DEAH box element. The 172-residue stretch at R492–G663 folds into the Helicase C-terminal domain.

It belongs to the SNF2/RAD54 helicase family. RapA subfamily. As to quaternary structure, interacts with the RNAP. Has a higher affinity for the core RNAP than for the holoenzyme. Its ATPase activity is stimulated by binding to RNAP.

Transcription regulator that activates transcription by stimulating RNA polymerase (RNAP) recycling in case of stress conditions such as supercoiled DNA or high salt concentrations. Probably acts by releasing the RNAP, when it is trapped or immobilized on tightly supercoiled DNA. Does not activate transcription on linear DNA. Probably not involved in DNA repair. In Actinobacillus pleuropneumoniae serotype 7 (strain AP76), this protein is RNA polymerase-associated protein RapA.